A 320-amino-acid chain; its full sequence is Probable cell division protein WhiA (320 aa).

A DNA-binding region (H-T-H motif) is located at residues 282–315 (TLKELGEMLSPAIGKSGVNHRLRKIDEIATKLQE).

It belongs to the WhiA family.

Functionally, involved in cell division and chromosome segregation. The sequence is that of Probable cell division protein WhiA from Alkaliphilus oremlandii (strain OhILAs) (Clostridium oremlandii (strain OhILAs)).